Here is a 221-residue protein sequence, read N- to C-terminus: Thiamine-phosphate synthase (221 aa).

4-amino-2-methyl-5-(diphosphooxymethyl)pyrimidine-binding positions include 46 to 50 and N82; that span reads QFREK. Mg(2+)-binding residues include D83 and D102. S121 serves as a coordination point for 4-amino-2-methyl-5-(diphosphooxymethyl)pyrimidine. 148 to 150 provides a ligand contact to 2-[(2R,5Z)-2-carboxy-4-methylthiazol-5(2H)-ylidene]ethyl phosphate; sequence TQS. K151 lines the 4-amino-2-methyl-5-(diphosphooxymethyl)pyrimidine pocket. Residues G180 and 200 to 201 contribute to the 2-[(2R,5Z)-2-carboxy-4-methylthiazol-5(2H)-ylidene]ethyl phosphate site; that span reads IS.

It belongs to the thiamine-phosphate synthase family. Mg(2+) is required as a cofactor.

The catalysed reaction is 2-[(2R,5Z)-2-carboxy-4-methylthiazol-5(2H)-ylidene]ethyl phosphate + 4-amino-2-methyl-5-(diphosphooxymethyl)pyrimidine + 2 H(+) = thiamine phosphate + CO2 + diphosphate. It carries out the reaction 2-(2-carboxy-4-methylthiazol-5-yl)ethyl phosphate + 4-amino-2-methyl-5-(diphosphooxymethyl)pyrimidine + 2 H(+) = thiamine phosphate + CO2 + diphosphate. It catalyses the reaction 4-methyl-5-(2-phosphooxyethyl)-thiazole + 4-amino-2-methyl-5-(diphosphooxymethyl)pyrimidine + H(+) = thiamine phosphate + diphosphate. Its pathway is cofactor biosynthesis; thiamine diphosphate biosynthesis; thiamine phosphate from 4-amino-2-methyl-5-diphosphomethylpyrimidine and 4-methyl-5-(2-phosphoethyl)-thiazole: step 1/1. Functionally, condenses 4-methyl-5-(beta-hydroxyethyl)thiazole monophosphate (THZ-P) and 2-methyl-4-amino-5-hydroxymethyl pyrimidine pyrophosphate (HMP-PP) to form thiamine monophosphate (TMP). This Pasteurella multocida (strain Pm70) protein is Thiamine-phosphate synthase.